An 887-amino-acid polypeptide reads, in one-letter code: MSERFPNDVDPIETRDWLQAIESVIREEGVERAQYLIDQLLAEARKGGVNVAAGTGISNYINTIPVEEQPEYPGNLELERRIRSAIRWNAIMTVLRASKKDLELGGHMASFQSSATIYDVCFNHFFRARNEQDGGDLVYFQGHISPGVYARAFLEGRLTQEQLDNFRQEVHGNGLSSYPHPKLMPEFWQFPTVSMGLGPIGAIYQAKFLKYLEHRGLKDTSKQTVYAFLGDGEMDEPESKGAITIATREKLDNLVFVINCNLQRLDGPVTGNGKIINELEGIFEGAGWNVIKVMWGSRWDELLRKDTSGKLIQLMNETVDGDYQTFKSKDGAYVREHFFGKYPETAALVADWTDEQIWALNRGGHDPKKIYAAFKKAQETKGKATVILAHTIKGYGMGDAAEGKNIAHQVKKMNMDGVRHIRDRFNVPVSDADIEKLPYITFPEGSEEHTYLHAQRQKLHGYLPSRQPNFTEKLELPSLQDFGALLEEQSKEISTTIAFVRALNVMLKNKSIKDRLVPIIADEARTFGMEGLFRQIGIYSPNGQQYTPQDREQVAYYKEDEKGQILQEGINELGAGCSWLAAATSYSTNNLPMIPFYIYYSMFGFQRIGDLCWAAGDQQARGFLIGGTSGRTTLNGEGLQHEDGHSHIQSLTIPNCISYDPAYAYEVAVIMHDGLERMYGEKQENVYYYITTLNENYHMPAMPEGAEEGIRKGIYKLETIEGSKGKVQLLGSGSILRHVREAAEILAKDYGVGSDVYSVTSFTELARDGQDCERWNMLHPLETPRVPYIAQVMNDAPAVASTDYMKLFAEQVRTYVPADDYRVLGTDGFGRSDSRENLRHHFEVDASYVVVAALGELAKRGEIDKKVVADAIAKFNIDADKVNPRLA.

D231, N261, and Q263 together coordinate Mg(2+). K716 carries the post-translational modification N6-acetyllysine.

Homodimer. Part of the PDH complex, consisting of multiple copies of pyruvate dehydrogenase (E1), dihydrolipoamide acetyltransferase (E2) and lipoamide dehydrogenase (E3). The cofactor is Mg(2+). It depends on thiamine diphosphate as a cofactor.

It carries out the reaction N(6)-[(R)-lipoyl]-L-lysyl-[protein] + pyruvate + H(+) = N(6)-[(R)-S(8)-acetyldihydrolipoyl]-L-lysyl-[protein] + CO2. Its function is as follows. Component of the pyruvate dehydrogenase (PDH) complex, that catalyzes the overall conversion of pyruvate to acetyl-CoA and CO(2). The chain is Pyruvate dehydrogenase E1 component (aceE) from Escherichia coli O157:H7.